The following is a 423-amino-acid chain: UPF0229 protein Pfl01_5140 (423 aa).

Positions 83–108 (TAGEHIARPPGGGGGRGPGKAGNSGE) are disordered. Positions 92–107 (PGGGGGRGPGKAGNSG) are enriched in gly residues.

Belongs to the UPF0229 family.

In Pseudomonas fluorescens (strain Pf0-1), this protein is UPF0229 protein Pfl01_5140.